Here is a 520-residue protein sequence, read N- to C-terminus: Probable cytochrome P450 4p2 (520 aa).

Heme contacts are provided by Glu325 and Cys464.

It belongs to the cytochrome P450 family. Heme is required as a cofactor.

The protein localises to the endoplasmic reticulum membrane. It localises to the microsome membrane. Its function is as follows. May be involved in the metabolism of insect hormones and in the breakdown of synthetic insecticides. In Drosophila melanogaster (Fruit fly), this protein is Probable cytochrome P450 4p2 (Cyp4p2).